The chain runs to 106 residues: Large ribosomal subunit protein uL24 (106 aa).

Belongs to the universal ribosomal protein uL24 family. Part of the 50S ribosomal subunit.

In terms of biological role, one of two assembly initiator proteins, it binds directly to the 5'-end of the 23S rRNA, where it nucleates assembly of the 50S subunit. Its function is as follows. One of the proteins that surrounds the polypeptide exit tunnel on the outside of the subunit. The chain is Large ribosomal subunit protein uL24 from Gluconobacter oxydans (strain 621H) (Gluconobacter suboxydans).